Consider the following 301-residue polypeptide: Bifunctional protein FolD (301 aa).

Residues 164-166, S191, and I232 contribute to the NADP(+) site; that span reads GRS.

Belongs to the tetrahydrofolate dehydrogenase/cyclohydrolase family. In terms of assembly, homodimer.

The catalysed reaction is (6R)-5,10-methylene-5,6,7,8-tetrahydrofolate + NADP(+) = (6R)-5,10-methenyltetrahydrofolate + NADPH. It carries out the reaction (6R)-5,10-methenyltetrahydrofolate + H2O = (6R)-10-formyltetrahydrofolate + H(+). It functions in the pathway one-carbon metabolism; tetrahydrofolate interconversion. In terms of biological role, catalyzes the oxidation of 5,10-methylenetetrahydrofolate to 5,10-methenyltetrahydrofolate and then the hydrolysis of 5,10-methenyltetrahydrofolate to 10-formyltetrahydrofolate. In Borreliella afzelii (strain PKo) (Borrelia afzelii), this protein is Bifunctional protein FolD.